The primary structure comprises 154 residues: Ribosome maturation factor RimP (154 aa).

It belongs to the RimP family.

The protein localises to the cytoplasm. Its function is as follows. Required for maturation of 30S ribosomal subunits. The polypeptide is Ribosome maturation factor RimP (Clostridium novyi (strain NT)).